Consider the following 312-residue polypeptide: Taste receptor type 2 member 7 (312 aa).

The Extracellular portion of the chain corresponds to 1–9 (MTYETDTTL). Residues 10–30 (MFVAVCEALVGILGNAFIALV) traverse the membrane as a helical segment. At 31–49 (NFMGWMKNRKITAIDLILS) the chain is on the cytoplasmic side. A helical transmembrane segment spans residues 50-70 (SLAMSRICLQCIILLDCIILV). Over 71 to 101 (QYPDTYNRGKEMRIIDFFWTLTNHLSVWFAT) the chain is Extracellular. The chain crosses the membrane as a helical span at residues 102–122 (CLSIFYFFKIANFFHPLFLWI). Over 123–128 (KWRIDK) the chain is Cytoplasmic. The helical transmembrane segment at 129–149 (LILRTLLACLILSLCFSLPVT) threads the bilayer. The Extracellular portion of the chain corresponds to 150–187 (ENLTDDFRRCVKTKERINSTLRCKLNKAGYASVKVNLN). Asn151 and Asn167 each carry an N-linked (GlcNAc...) asparagine glycan. Residues 188–208 (LVMLFPFSVSLVSFLLLILSL) traverse the membrane as a helical segment. At 209–235 (WRHTRQMQLNVTGYNDPSTTAHVKATK) the chain is on the cytoplasmic side. Residues 236–256 (AVISFLVLFIVYCLAFLIATS) form a helical membrane-spanning segment. The Extracellular segment spans residues 257–266 (SYFMPESELA). The chain crosses the membrane as a helical span at residues 267 to 287 (VIWGELIALIYPSSHSFILIL). At 288–312 (GNSKLKQASVRVLCRVKTMLKGRKY) the chain is on the cytoplasmic side.

It belongs to the G-protein coupled receptor T2R family. Expressed in subsets of taste receptor cells of the tongue and palate epithelium and exclusively in gustducin-positive cells. Expressed in 15% taste bud cells in circumvallate and foliate papillae but only in 2% in fungiform papillae. Expressed in the duodenum, antrum and fundus (part of the stomach) and in gastric endocrine cells.

Its subcellular location is the membrane. Its function is as follows. Gustducin-coupled receptor implicated in the perception of bitter compounds in the oral cavity and the gastrointestinal tract. Signals through PLCB2 and the calcium-regulated cation channel TRPM5. In Rattus norvegicus (Rat), this protein is Taste receptor type 2 member 7 (Tas2r7).